The primary structure comprises 380 residues: Lipid-A-disaccharide synthase (380 aa).

Belongs to the LpxB family.

It carries out the reaction a lipid X + a UDP-2-N,3-O-bis[(3R)-3-hydroxyacyl]-alpha-D-glucosamine = a lipid A disaccharide + UDP + H(+). It functions in the pathway bacterial outer membrane biogenesis; LPS lipid A biosynthesis. Its function is as follows. Condensation of UDP-2,3-diacylglucosamine and 2,3-diacylglucosamine-1-phosphate to form lipid A disaccharide, a precursor of lipid A, a phosphorylated glycolipid that anchors the lipopolysaccharide to the outer membrane of the cell. The polypeptide is Lipid-A-disaccharide synthase (Vibrio vulnificus (strain CMCP6)).